The chain runs to 67 residues: Large ribosomal subunit protein bL35 (67 aa).

The protein belongs to the bacterial ribosomal protein bL35 family.

The chain is Large ribosomal subunit protein bL35 from Bartonella tribocorum (strain CIP 105476 / IBS 506).